The sequence spans 545 residues: Monocarboxylate transporter 8 (545 aa).

Residues 1 to 98 (MALPSPASEE…VETRGTARGF (98 aa)) are disordered. N-acetylalanine is present on alanine 2. The Cytoplasmic portion of the chain corresponds to 2 to 102 (ALPSPASEEA…GTARGFQPPE (101 aa)). Tandem repeats lie at residues 29 to 50 (PVPE…PVPV) and 51 to 72 (PPPE…PLPV). The 2 X 22 AA approximate tandem repeats stretch occupies residues 29–72 (PVPEPEPEPEPEPEPEPEPVPVPPPEPQPEPEPQPLPDPAPLPV). Positions 33–45 (PEPEPEPEPEPEP) are enriched in acidic residues. Pro residues predominate over residues 46-70 (EPVPVPPPEPQPEPEPQPLPDPAPL). A helical membrane pass occupies residues 103-123 (GGFGWIVVFAATWCNGSIFGI). Residues 124 to 149 (HNSVGILYSMLLEEEKEKNRQVEFQA) lie on the Extracellular side of the membrane. The chain crosses the membrane as a helical span at residues 150-170 (AWVGALAMGMIFFCSPIVSIF). The Cytoplasmic portion of the chain corresponds to 171–181 (TDRLGCRITAT). A helical membrane pass occupies residues 182-202 (TGAAVAFIGLHTSSFTSSLSL). At 203–204 (RY) the chain is on the extracellular side. A helical transmembrane segment spans residues 205 to 225 (FTYGILFGCGCSFAFQPSLVI). Residues 226–235 (LGHYFQRRLG) are Cytoplasmic-facing. Residues 236–256 (LANGVVSAGSSIFSMSFPFLI) form a helical membrane-spanning segment. The Extracellular segment spans residues 257 to 264 (KMLGDRIK). The chain crosses the membrane as a helical span at residues 265–285 (LAQTFQVLSTFMFVLTLLSLT). Over 286 to 328 (YRPLLPSSQDTPSKRGAHTLRQRFLVQFRKYFNMRVFRQRTYR) the chain is Cytoplasmic. Residues 329–349 (IWAFGIAAAALGYFVPYVHLM) form a helical membrane-spanning segment. Topologically, residues 350 to 362 (KYVEDKFKEIKET) are extracellular. Residues 363 to 383 (WVLLVCIGATSGLGRLVSGHI) traverse the membrane as a helical segment. Over 384–392 (SDSIPGLKK) the chain is Cytoplasmic. Residues 393–413 (IYLQVLSFLLLGLMSMMIPLC) traverse the membrane as a helical segment. Topologically, residues 414–415 (RD) are extracellular. Residues 416-436 (FGGLIVVCLFLGLCDGFFITI) form a helical membrane-spanning segment. Over 437–453 (MAPIAFELVGPMQASQA) the chain is Cytoplasmic. Residues 454–474 (IGYLLGMMALPMIAGPPIAGL) form a helical membrane-spanning segment. Residues 475–483 (LRNCFGNYH) are Extracellular-facing. Residues 484–504 (VAFYFAGVPPIIGAVILFFVP) traverse the membrane as a helical segment. Residues 505-545 (LMHQRMFKKEQRESSKDKMLSHDPDPNGELLPGSPTPEEPI) lie on the Cytoplasmic side of the membrane. Residues 514 to 529 (EQRESSKDKMLSHDPD) are compositionally biased toward basic and acidic residues. A disordered region spans residues 514 to 545 (EQRESSKDKMLSHDPDPNGELLPGSPTPEEPI). Threonine 540 bears the Phosphothreonine mark.

The protein belongs to the major facilitator superfamily. Monocarboxylate porter (TC 2.A.1.13) family. In terms of assembly, monomer. Homodimer. Homooligomer. In terms of tissue distribution, expressed at highest levels in liver, lower levels in brain, kidney and heart (at protein level). Expressed in microvessels of the blood-brain barrier (BBB) (at protein level).

The protein resides in the cell membrane. The protein localises to the apical cell membrane. It carries out the reaction 3,3',5-triiodo-L-thyronine(out) = 3,3',5-triiodo-L-thyronine(in). The enzyme catalyses 3,3',5'-triiodo-L-thyronine(out) = 3,3',5'-triiodo-L-thyronine(in). The catalysed reaction is L-thyroxine(out) = L-thyroxine(in). It catalyses the reaction 3,3'-diiodo-L-thyronine(out) = 3,3'-diiodo-L-thyronine(in). Its function is as follows. Specific thyroid hormone transmembrane transporter, that mediates both uptake and efflux of thyroid hormone across the cell membrane independently of pH or a Na(+) gradient. Major substrates are the iodothyronines T3 and T4 and to a lesser extent rT3 and 3,3-diiodothyronine (3,3'-T2). Acts as an important mediator of thyroid hormone transport, especially T3, through the blood-brain barrier. In Rattus norvegicus (Rat), this protein is Monocarboxylate transporter 8 (SLC16A2).